A 362-amino-acid chain; its full sequence is Class I histocompatibility antigen, Gogo-OKO alpha chain (362 aa).

The first 24 residues, 1-24 (MAVVAPRTLLLLLSGTLALTRTWA), serve as a signal peptide directing secretion. An alpha-1 region spans residues 25 to 114 (GSHSMRYFYT…LRGYYNQSEG (90 aa)). Topologically, residues 25 to 308 (GSHSMRYFYT…EPSSQPTIPI (284 aa)) are extracellular. Residue asparagine 110 is glycosylated (N-linked (GlcNAc...) asparagine). An alpha-2 region spans residues 115 to 206 (GSHTIQRMYG…ENGKETLQRT (92 aa)). Disulfide bonds link cysteine 125–cysteine 188 and cysteine 227–cysteine 283. Positions 207-298 (DPPKTHMTHH…GLPKPLTLRW (92 aa)) are alpha-3. Residues 209 to 295 (PKTHMTHHPV…QHEGLPKPLT (87 aa)) enclose the Ig-like C1-type domain. The connecting peptide stretch occupies residues 299-308 (EPSSQPTIPI). Residues 309–332 (VGIIAGLVLLGAVITGAVVAAMMW) form a helical membrane-spanning segment. The Cytoplasmic portion of the chain corresponds to 333 to 362 (RKKSSGRKGGSYSQAASSDSAQGSDVSLTA). The tract at residues 337–362 (SGRKGGSYSQAASSDSAQGSDVSLTA) is disordered. The span at 342-362 (GSYSQAASSDSAQGSDVSLTA) shows a compositional bias: low complexity.

Belongs to the MHC class I family. In terms of assembly, heterodimer of an alpha chain and a beta chain (beta-2-microglobulin).

The protein resides in the membrane. Involved in the presentation of foreign antigens to the immune system. The protein is Class I histocompatibility antigen, Gogo-OKO alpha chain of Gorilla gorilla gorilla (Western lowland gorilla).